A 351-amino-acid polypeptide reads, in one-letter code: Photosystem II D2 protein (351 aa).

Residues 39-59 (TAYLAIGGWLTGTTFVTSWYT) traverse the membrane as a helical segment. Histidine 116 serves as a coordination point for chlorophyll a. Residues 123 to 139 (GFMLRQFEIARLVGIRP) form a helical membrane-spanning segment. The pheophytin a site is built by glutamine 128 and asparagine 141. The chain crosses the membrane as a helical span at residues 151–164 (VFVSVFLMYPLGQS). Histidine 196 provides a ligand contact to chlorophyll a. Residues 206–226 (GALLCAIHGATVENTLFEDGE) form a helical membrane-spanning segment. A plastoquinone is bound by residues histidine 213 and phenylalanine 260. Fe cation is bound at residue histidine 213. Residue histidine 267 coordinates Fe cation. The chain crosses the membrane as a helical span at residues 277–293 (GLWTSSIGIIGLALNLR).

This sequence belongs to the reaction center PufL/M/PsbA/D family. As to quaternary structure, PSII is composed of 1 copy each of membrane proteins PsbA, PsbB, PsbC, PsbD, PsbE, PsbF, PsbH, PsbI, PsbJ, PsbK, PsbL, PsbM, PsbT, PsbX, PsbY, PsbZ, Psb30/Ycf12, peripheral proteins PsbO, CyanoQ (PsbQ), PsbU, PsbV and a large number of cofactors. It forms dimeric complexes. The D1/D2 heterodimer binds P680, chlorophylls that are the primary electron donor of PSII, and subsequent electron acceptors. It shares a non-heme iron and each subunit binds pheophytin, quinone, additional chlorophylls, carotenoids and lipids. There is also a Cl(-1) ion associated with D1 and D2, which is required for oxygen evolution. The PSII complex binds additional chlorophylls, carotenoids and specific lipids. serves as cofactor.

The protein localises to the cellular thylakoid membrane. The catalysed reaction is 2 a plastoquinone + 4 hnu + 2 H2O = 2 a plastoquinol + O2. Its function is as follows. Photosystem II (PSII) is a light-driven water:plastoquinone oxidoreductase that uses light energy to abstract electrons from H(2)O, generating O(2) and a proton gradient subsequently used for ATP formation. It consists of a core antenna complex that captures photons, and an electron transfer chain that converts photonic excitation into a charge separation. The D1/D2 (PsbA/PsbD) reaction center heterodimer binds P680, the primary electron donor of PSII as well as several subsequent electron acceptors. D2 is needed for assembly of a stable PSII complex. The polypeptide is Photosystem II D2 protein (Synechococcus sp. (strain CC9605)).